Reading from the N-terminus, the 113-residue chain is Translation initiation factor 1A (113 aa).

The region spanning 12 to 87 (EVIRVPLPEG…KRGDIVYRYT (76 aa)) is the S1-like domain.

Belongs to the eIF-1A family.

Its function is as follows. Seems to be required for maximal rate of protein biosynthesis. Enhances ribosome dissociation into subunits and stabilizes the binding of the initiator Met-tRNA(I) to 40 S ribosomal subunits. The polypeptide is Translation initiation factor 1A (eIF1A) (Pyrococcus abyssi (strain GE5 / Orsay)).